The sequence spans 243 residues: MISVMQQMINNDSPEDSKESITSVQQTPFFWPSAAAAIPSIQGESRSERESETGSSPQLAPSSTGMVMPGTAGMYGFGPSRMPTANEFGMMMNPVYTDFYQNPLASTGWYSYGQPYQFTANYSIPSLDGNLSDITIPTTAGSSAATTPNAAMHLPWAISHDGKKKRQPYKKDQISRLEYEYSVNQYLTNKRRSELSAQLMLDEKQVKVWFQNRRMKDKKLRQRHSGPFPHGAPVTPCIERLIN.

Positions 1-12 (MISVMQQMINND) are enriched in polar residues. 2 disordered regions span residues 1–23 (MISVMQQMINNDSPEDSKESITS) and 40–67 (SIQGESRSERESETGSSPQLAPSSTGMV). The segment at residues 162–221 (GKKKRQPYKKDQISRLEYEYSVNQYLTNKRRSELSAQLMLDEKQVKVWFQNRRMKDKKLR) is a DNA-binding region (homeobox).

It belongs to the abd-b homeobox family. In terms of assembly, interacts with nuclear receptor nhr-25. Interacts with geminin homolog gmn-1. Interacts with homeodomain protein ceh-20.

It is found in the nucleus. Functionally, transcription factor, involved in posterior embryonic patterning, morphogenetic movements of the posterior hypodermis, and cell fate specification. Binds to the 5'-TAGT-3' motif in regulatory elements of genes, including Meis protein psa-3 and microRNA mir-57. Involved in a negative regulatory loop with mir-57 to specify posterior cell identities. Required for asymmetric division of the T hypodermal cell, acting via the regulation of asymmetric expression of psa-3 in cooperation with ceh-20 and the Wnt-MAPK pathway. Involved in the regulation of the onset of non-apoptotic cell death in the linker cell, acting together with the Wnt signaling pathway. Involved in promoting embryogenesis, in concert with orphan nuclear receptor nhr-25. May regulate expression of transcription factor dmd-3. The polypeptide is Homeobox protein nob-1 (Caenorhabditis elegans).